We begin with the raw amino-acid sequence, 342 residues long: Ribosomal RNA small subunit methyltransferase H (342 aa).

S-adenosyl-L-methionine-binding positions include 36-38 (GGH), aspartate 56, phenylalanine 82, aspartate 100, and glutamine 107. The tract at residues 309 to 342 (ENRESGMGKGHGAAASRFPTPDSRFPTSPNGDAP) is disordered. Residues 333-342 (FPTSPNGDAP) show a composition bias toward polar residues.

Belongs to the methyltransferase superfamily. RsmH family.

It localises to the cytoplasm. It carries out the reaction cytidine(1402) in 16S rRNA + S-adenosyl-L-methionine = N(4)-methylcytidine(1402) in 16S rRNA + S-adenosyl-L-homocysteine + H(+). Functionally, specifically methylates the N4 position of cytidine in position 1402 (C1402) of 16S rRNA. This chain is Ribosomal RNA small subunit methyltransferase H, found in Xanthomonas campestris pv. campestris (strain 8004).